Here is a 275-residue protein sequence, read N- to C-terminus: Large ribosomal subunit protein uL2 (275 aa).

Positions 222-275 are disordered; that stretch reads GVAMNPVDHPMGGGEGRSSGGRHPCSPWGMPTKGYKTRKNKTTDKFIVRKRNKR.

Belongs to the universal ribosomal protein uL2 family. Part of the 50S ribosomal subunit. Forms a bridge to the 30S subunit in the 70S ribosome.

One of the primary rRNA binding proteins. Required for association of the 30S and 50S subunits to form the 70S ribosome, for tRNA binding and peptide bond formation. It has been suggested to have peptidyltransferase activity; this is somewhat controversial. Makes several contacts with the 16S rRNA in the 70S ribosome. The chain is Large ribosomal subunit protein uL2 from Desulfatibacillum aliphaticivorans.